Reading from the N-terminus, the 355-residue chain is Blue-sensitive opsin (355 aa).

At 1 to 36 (MNGTEGINFYVPLSNKTGLVRSPFEYPQYYLAEPWK) the chain is on the extracellular side. N2 and N15 each carry an N-linked (GlcNAc...) asparagine glycan. The chain crosses the membrane as a helical span at residues 37–61 (YKVVCCYIFFLIFTGLPINILTLLV). At 62–73 (TFKHKKLRQPLN) the chain is on the cytoplasmic side. The chain crosses the membrane as a helical span at residues 74 to 98 (YILVNLAVADLFMACFGFTVTFYTA). The Extracellular portion of the chain corresponds to 99–113 (WNGYFIFGPIGCAIE). C110 and C187 are joined by a disulfide. The chain crosses the membrane as a helical span at residues 114 to 133 (GFFATLGGQVALWSLVVLAI). Topologically, residues 134–152 (ERYIVVCKPMGNFRFSATH) are cytoplasmic. The helical transmembrane segment at 153 to 176 (ALMGISFTWFMSFSCAAPPLLGWS) threads the bilayer. Over 177 to 202 (RYIPEGMQCSCGPDYYTLNPDYHNES) the chain is Extracellular. N-linked (GlcNAc...) asparagine glycosylation is present at N200. The chain crosses the membrane as a helical span at residues 203–230 (YVLYMFGVHFVIPVVVIFFSYGRLICKV). Residues 231 to 252 (REAAAQQQESASTQKAEREVTR) lie on the Cytoplasmic side of the membrane. The helical transmembrane segment at 253-276 (MVILMVLGFLLAWTPYAMVAFWIF) threads the bilayer. The Extracellular segment spans residues 277 to 284 (TNKGVDFS). Residues 285–309 (ATLMSVPAFFSKSSSLYNPIIYVLM) traverse the membrane as a helical segment. Residue K296 is modified to N6-(retinylidene)lysine. The Cytoplasmic portion of the chain corresponds to 310 to 355 (NKQFRNCMITTICCGKNPFGDEDVSSSVSQSKTEVSSVSSSQVSPA). Residues C322 and C323 are each lipidated (S-palmitoyl cysteine). The segment at 332–355 (DVSSSVSQSKTEVSSVSSSQVSPA) is disordered. Low complexity predominate over residues 334–355 (SSSVSQSKTEVSSVSSSQVSPA).

The protein belongs to the G-protein coupled receptor 1 family. Opsin subfamily. Phosphorylated on some or all of the serine and threonine residues present in the C-terminal region.

The protein resides in the membrane. In terms of biological role, visual pigments are the light-absorbing molecules that mediate vision. They consist of an apoprotein, opsin, covalently linked to cis-retinal. This opsin uses a vitamin A2 chromophore. This Anolis carolinensis (Green anole) protein is Blue-sensitive opsin.